A 257-amino-acid polypeptide reads, in one-letter code: Adenylate kinase (257 aa).

Residue 52–57 (GAGKGT) coordinates ATP. The tract at residues 72–101 (ATGDMLRSQVAKKTELGKEAKKIMDQGGLV) is NMP. AMP contacts are provided by residues threonine 73, arginine 78, 99–101 (GLV), 128–131 (GFPR), and glutamine 135. Positions 169 to 206 (GRLVHPASGRSYHKIFNPPKNDMKDDVTGEPLIQRSDD) are LID. ATP-binding positions include arginine 170 and 179–180 (SY). AMP-binding residues include arginine 203 and arginine 214. Glutamine 242 is an ATP binding site.

The protein belongs to the adenylate kinase family. AK2 subfamily. In terms of assembly, monomer.

The protein localises to the cytoplasm. It is found in the cytosol. It localises to the mitochondrion intermembrane space. It catalyses the reaction AMP + ATP = 2 ADP. Functionally, catalyzes the reversible transfer of the terminal phosphate group between ATP and AMP. Plays an important role in cellular energy homeostasis and in adenine nucleotide metabolism. Adenylate kinase activity is critical for regulation of the phosphate utilization and the AMP de novo biosynthesis pathways. The polypeptide is Adenylate kinase (adk1) (Neosartorya fischeri (strain ATCC 1020 / DSM 3700 / CBS 544.65 / FGSC A1164 / JCM 1740 / NRRL 181 / WB 181) (Aspergillus fischerianus)).